A 209-amino-acid polypeptide reads, in one-letter code: Claudin-4 (209 aa).

The Cytoplasmic portion of the chain corresponds to 1–7; the sequence is MASMGLQ. Residues 1 to 103 are interaction with EPHA2; it reads MASMGLQVMG…GVLLSVVGGK (103 aa). Residues 8–28 traverse the membrane as a helical segment; it reads VMGIALAVLGWLAVMLCCALP. Residues 29-81 lie on the Extracellular side of the membrane; the sequence is MWRVTAFIGSNIVTSQTIWEGLWMNCVVQSTGQMQCKVYDSLLALPQDLQAAR. The cysteines at positions 54 and 64 are disulfide-linked. The helical transmembrane segment at 82–102 threads the bilayer; that stretch reads ALVIISIIVAALGVLLSVVGG. Topologically, residues 103–117 are cytoplasmic; it reads KCTNCLEDESAKAKT. Residues 118–138 traverse the membrane as a helical segment; the sequence is MIVAGVVFLLAGLMVIVPVSW. At 139 to 160 the chain is on the extracellular side; that stretch reads TAHNIIQDFYNPLVASGQKREM. A helical transmembrane segment spans residues 161-181; sequence GASLYVGWAASGLLLLGGGLL. Over 182–209 the chain is Cytoplasmic; the sequence is CCNCPPRTDKPYSAKYSAARSAAASNYV. A Phosphotyrosine; by EPHA2 modification is found at tyrosine 208. Residues 208–209 are interactions with TJP1, TJP2 and TJP3; sequence YV.

The protein belongs to the claudin family. In terms of assembly, can form heteropolymeric strands with other claudins. Interacts with CLDN8. Interacts with CLDN1. Directly interacts with TJP1/ZO-1. Interacts with TJP2/ZO-2 and TJP3/ZO-3. Interacts with EPHA2; phosphorylates CLDN4 and may regulate tight junctions. (Microbial infection) Interacts (via both extracellular domains) with Clostridium perfringens enterotoxin CPE; the interaction may disrupt claudin assembly in tight junctions. Phosphorylated. Phosphorylation by EPHA2 is stimulated by EFNA1 and alters interaction with TJP1.

The protein localises to the cell junction. It is found in the tight junction. Its subcellular location is the cell membrane. It carries out the reaction chloride(in) = chloride(out). The catalysed reaction is bromide(in) = bromide(out). It catalyses the reaction iodide(out) = iodide(in). The enzyme catalyses fluoride(in) = fluoride(out). In terms of biological role, can associate with other claudins to regulate tight junction structural and functional strand dynamics. May coassemble with CLDN8 into tight junction strands containing anion-selective channels that convey paracellular chloride permeability in renal collecting ducts. May integrate into CLDN3 strands to modulate localized tight junction barrier properties. May disrupt strand assembly of channel-forming CLDN2 and CLDN15 and inhibit cation conductance. Cannot form tight junction strands on its own. The polypeptide is Claudin-4 (Homo sapiens (Human)).